The primary structure comprises 259 residues: Acyl-[acyl-carrier-protein]--UDP-N-acetylglucosamine O-acyltransferase (259 aa).

It belongs to the transferase hexapeptide repeat family. LpxA subfamily. As to quaternary structure, homotrimer.

Its subcellular location is the cytoplasm. It carries out the reaction a (3R)-hydroxyacyl-[ACP] + UDP-N-acetyl-alpha-D-glucosamine = a UDP-3-O-[(3R)-3-hydroxyacyl]-N-acetyl-alpha-D-glucosamine + holo-[ACP]. Its pathway is glycolipid biosynthesis; lipid IV(A) biosynthesis; lipid IV(A) from (3R)-3-hydroxytetradecanoyl-[acyl-carrier-protein] and UDP-N-acetyl-alpha-D-glucosamine: step 1/6. Its function is as follows. Involved in the biosynthesis of lipid A, a phosphorylated glycolipid that anchors the lipopolysaccharide to the outer membrane of the cell. The sequence is that of Acyl-[acyl-carrier-protein]--UDP-N-acetylglucosamine O-acyltransferase from Psychrobacter arcticus (strain DSM 17307 / VKM B-2377 / 273-4).